Consider the following 226-residue polypeptide: Ribosome maturation factor RimM (226 aa).

Positions alanine 144–tyrosine 225 constitute a PRC barrel domain.

Belongs to the RimM family. In terms of assembly, binds ribosomal protein uS19.

Its subcellular location is the cytoplasm. An accessory protein needed during the final step in the assembly of 30S ribosomal subunit, possibly for assembly of the head region. Essential for efficient processing of 16S rRNA. May be needed both before and after RbfA during the maturation of 16S rRNA. It has affinity for free ribosomal 30S subunits but not for 70S ribosomes. This chain is Ribosome maturation factor RimM, found in Burkholderia ambifaria (strain ATCC BAA-244 / DSM 16087 / CCUG 44356 / LMG 19182 / AMMD) (Burkholderia cepacia (strain AMMD)).